Here is a 160-residue protein sequence, read N- to C-terminus: Glucagon-1 (160 aa).

An N-terminal signal peptide occupies residues 1–22 (MSDPGFLAAPVLLLLLVSLASA). Propeptides lie at residues 23 to 40 (SLEQ…RPLS), 74 to 79 (GGSELQ), and 116 to 127 (DGGDHLAENSED). The tract at residues 112 to 132 (KSRRDGGDHLAENSEDKRHAE) is disordered.

It belongs to the glucagon family.

It is found in the secreted. Its function is as follows. Promotes hydrolysis of glycogen and lipids, and raises the blood sugar level. In Petromyzon marinus (Sea lamprey), this protein is Glucagon-1 (gcg1).